The following is a 351-amino-acid chain: Bifunctional UDP-glucose 4-epimerase and UDP-xylose 4-epimerase 3 (351 aa).

8-39 (NILVTGGAGFIGTHTVVQLLNQGFKVTIIDNL) serves as a coordination point for NAD(+). Residue S134 participates in substrate binding. Y158 serves as the catalytic Proton acceptor.

The protein belongs to the NAD(P)-dependent epimerase/dehydratase family. In terms of assembly, homodimer. Heterodimer. NAD(+) serves as cofactor. Ubiquitous.

The enzyme catalyses UDP-alpha-D-glucose = UDP-alpha-D-galactose. The catalysed reaction is UDP-beta-L-arabinopyranose = UDP-alpha-D-xylose. The protein operates within carbohydrate metabolism; galactose metabolism. Its pathway is nucleotide-sugar biosynthesis; UDP-L-arabinose biosynthesis; UDP-L-arabinose from UDP-alpha-D-xylose: step 1/1. It participates in cell wall biogenesis; cell wall polysaccharide biosynthesis. Strongly inhibited by UDP. In terms of biological role, catalyzes the interconversion between UDP-glucose and UDP-galactose and the interconversion between UDP-arabinose and UDP-xylose. Cooperates with UGE2 in pollen development. May preferentially act in the UDP-galactose to UDP-glucose direction, therefore displaying a role in carbohydrate catabolism. The protein is Bifunctional UDP-glucose 4-epimerase and UDP-xylose 4-epimerase 3 (UGE3) of Arabidopsis thaliana (Mouse-ear cress).